The following is a 314-amino-acid chain: Olfactory receptor 1E5 (314 aa).

The Extracellular segment spans residues 1-25 (MMGQNQTSISDFLLLGLPIQPEQQN). N-linked (GlcNAc...) asparagine glycosylation is present at Asn5. The helical transmembrane segment at 26 to 49 (LCYALFLAMYLTTLLGNLLIIVLI) threads the bilayer. The Cytoplasmic segment spans residues 50-57 (RLDSHLHT). The chain crosses the membrane as a helical span at residues 58 to 79 (PMYLFLSNLSFSDLCFSSVTIP). At 80–100 (KLLQNMQNQDPSIPYADCLTQ) the chain is on the extracellular side. Cys97 and Cys189 form a disulfide bridge. A helical transmembrane segment spans residues 101–120 (MYFFLLFGDLESFLLVAMAY). The Cytoplasmic segment spans residues 121-139 (DRYVAICFPLHYTAIMSPM). The chain crosses the membrane as a helical span at residues 140–158 (LCLSLVALSWVLTTFHAML). Residues 159-196 (HTLLMARLCFCADNVIPHFFCDMSALLKLACSDTRVNE) are Extracellular-facing. A helical transmembrane segment spans residues 197–219 (WVIFIMGGLIVVIPFLLILGSYA). Topologically, residues 220–236 (RIVSSILKVPSSKGICK) are cytoplasmic. A helical transmembrane segment spans residues 237–260 (AFSTCGSHLSVVSLFYGTIIGLYL). The Extracellular portion of the chain corresponds to 261 to 272 (CPSANSSTLKET). A glycan (N-linked (GlcNAc...) asparagine) is linked at Asn265. The chain crosses the membrane as a helical span at residues 273–292 (VMAMMYTVVTPMLNPFIYSL). Residues 293-314 (RNRDMKGALERVIXKRKNPFLL) are Cytoplasmic-facing.

It belongs to the G-protein coupled receptor 1 family.

The protein resides in the cell membrane. Functionally, odorant receptor. In Pan troglodytes (Chimpanzee), this protein is Olfactory receptor 1E5 (OR1E5).